The following is a 392-amino-acid chain: 4-hydroxybenzoate polyprenyltransferase, mitochondrial (392 aa).

The transit peptide at M1–A22 directs the protein to the mitochondrion. A run of 9 helical transmembrane segments spans residues I90–G110, L115–I135, F163–L183, N184–M204, V207–W227, L236–I256, V283–C303, V307–L327, and F339–L359. The tract at residues K365 to S392 is disordered. A compositionally biased stretch (polar residues) spans Q369–S379.

The protein belongs to the UbiA prenyltransferase family. Requires Mg(2+) as cofactor.

It localises to the mitochondrion inner membrane. The catalysed reaction is an all-trans-polyprenyl diphosphate + 4-hydroxybenzoate = a 4-hydroxy-3-(all-trans-polyprenyl)benzoate + diphosphate. Its pathway is cofactor biosynthesis; ubiquinone biosynthesis. Catalyzes the prenylation of para-hydroxybenzoate (PHB) with an all-trans polyprenyl group. Mediates the second step in the final reaction sequence of coenzyme Q (CoQ) biosynthesis, which is the condensation of the polyisoprenoid side chain with PHB, generating the first membrane-bound Q intermediate. In Drosophila melanogaster (Fruit fly), this protein is 4-hydroxybenzoate polyprenyltransferase, mitochondrial.